A 225-amino-acid chain; its full sequence is UPF0758 protein Bpet3149 (225 aa).

The MPN domain maps to 103–225 (AMSEPGSVKR…VVSMAELGLL (123 aa)). His174, His176, and Asp187 together coordinate Zn(2+). Positions 174–187 (HNHPSGSAQPSQAD) match the JAMM motif motif.

It belongs to the UPF0758 family.

The chain is UPF0758 protein Bpet3149 from Bordetella petrii (strain ATCC BAA-461 / DSM 12804 / CCUG 43448).